We begin with the raw amino-acid sequence, 440 residues long: 3-phosphoshikimate 1-carboxyvinyltransferase (440 aa).

Residues Lys25, Ser26, and Arg30 each coordinate 3-phosphoshikimate. A phosphoenolpyruvate-binding site is contributed by Lys25. The phosphoenolpyruvate site is built by Gly96 and Arg124. 3-phosphoshikimate-binding residues include Ser168, Gln169, Asp310, and Lys337. Gln169 is a phosphoenolpyruvate binding site. The active-site Proton acceptor is the Asp310. 3 residues coordinate phosphoenolpyruvate: Arg341, Arg382, and Lys409.

Belongs to the EPSP synthase family. In terms of assembly, monomer.

It localises to the cytoplasm. The enzyme catalyses 3-phosphoshikimate + phosphoenolpyruvate = 5-O-(1-carboxyvinyl)-3-phosphoshikimate + phosphate. It participates in metabolic intermediate biosynthesis; chorismate biosynthesis; chorismate from D-erythrose 4-phosphate and phosphoenolpyruvate: step 6/7. Functionally, catalyzes the transfer of the enolpyruvyl moiety of phosphoenolpyruvate (PEP) to the 5-hydroxyl of shikimate-3-phosphate (S3P) to produce enolpyruvyl shikimate-3-phosphate and inorganic phosphate. This Chlamydia trachomatis serovar L2 (strain ATCC VR-902B / DSM 19102 / 434/Bu) protein is 3-phosphoshikimate 1-carboxyvinyltransferase.